Consider the following 254-residue polypeptide: Acetylglutamate kinase (254 aa).

Substrate-binding positions include 40 to 41 (GG), Arg-62, and Asn-154. ATP contacts are provided by residues 177 to 182 (DVSGIL) and 205 to 207 (IIT).

Belongs to the acetylglutamate kinase family. ArgB subfamily. In terms of assembly, homodimer.

The protein resides in the cytoplasm. It carries out the reaction N-acetyl-L-glutamate + ATP = N-acetyl-L-glutamyl 5-phosphate + ADP. Its pathway is amino-acid biosynthesis; L-arginine biosynthesis; N(2)-acetyl-L-ornithine from L-glutamate: step 2/4. Its function is as follows. Catalyzes the ATP-dependent phosphorylation of N-acetyl-L-glutamate. The protein is Acetylglutamate kinase of Yersinia enterocolitica serotype O:8 / biotype 1B (strain NCTC 13174 / 8081).